We begin with the raw amino-acid sequence, 583 residues long: MNIQYLLLQRVHEALTLINTKSFLNLIQVQQSNHIRFGDYQINGMINISKHLQIPIKDFSNIFIKTINLKGIAKIIKFEPPGFINIFLSPTWIENKINHIIDLPKLGIDLIPSKNIVIDYSSPNIAKEMHVGHLRSTIIGDSIARILSFLGHNVIRSNHIGDWGTQFGMLIAYIKKHKINYLSLNDSQQISMLEYYYQESKKEYDSDPNFAELSRKYVVKLQKGDVYCRKIWKYLVDISISNNQKIYDRLNVTLKKKDIMGESMYHDMLPYIITDLKNKKLAVTSDHATIVFLNQNKNSKKNNPFGVIIQKKDGGYLYSTTDIACIKYRCETLHADRIIYYIDSRQKQHLMQAWEIAYQAGYITKAVVFEHHVCGMLLDKNKKPFKTRSGNTIKLITLLNEAFNKAYNLILNKNLNLEYKKINHLAHIISIGAIKYSELSKNRTTNYIFNWDKILNFDGNTAPYIQYAYTRISSIFKKINHRSELQEKKYQIFLSSQEEILLAICLLQFHETLITVADRGTPHILCGYLYKLSTLFSLFYEHCPILKTECTYTKYSRLKLSFITAQILKKGLNLLGIETSEYM.

Residues 123–133 carry the 'HIGH' region motif; the sequence is PNIAKEMHVGH.

The protein belongs to the class-I aminoacyl-tRNA synthetase family. In terms of assembly, monomer.

The protein localises to the cytoplasm. The enzyme catalyses tRNA(Arg) + L-arginine + ATP = L-arginyl-tRNA(Arg) + AMP + diphosphate. The chain is Arginine--tRNA ligase from Blochmanniella floridana.